The following is a 469-amino-acid chain: Glutamate--tRNA ligase (469 aa).

The short motif at 9-19 (PSPTGYLHVGG) is the 'HIGH' region element. Zn(2+) contacts are provided by C98, C100, C125, and D127. Residues 237 to 241 (KLSKR) carry the 'KMSKS' region motif. K240 provides a ligand contact to ATP.

The protein belongs to the class-I aminoacyl-tRNA synthetase family. Glutamate--tRNA ligase type 1 subfamily. In terms of assembly, monomer. Requires Zn(2+) as cofactor.

The protein localises to the cytoplasm. The catalysed reaction is tRNA(Glu) + L-glutamate + ATP = L-glutamyl-tRNA(Glu) + AMP + diphosphate. Catalyzes the attachment of glutamate to tRNA(Glu) in a two-step reaction: glutamate is first activated by ATP to form Glu-AMP and then transferred to the acceptor end of tRNA(Glu). The polypeptide is Glutamate--tRNA ligase (Serratia proteamaculans (strain 568)).